Here is a 364-residue protein sequence, read N- to C-terminus: Aminomethyltransferase (364 aa).

The protein belongs to the GcvT family. The glycine cleavage system is composed of four proteins: P, T, L and H.

It catalyses the reaction N(6)-[(R)-S(8)-aminomethyldihydrolipoyl]-L-lysyl-[protein] + (6S)-5,6,7,8-tetrahydrofolate = N(6)-[(R)-dihydrolipoyl]-L-lysyl-[protein] + (6R)-5,10-methylene-5,6,7,8-tetrahydrofolate + NH4(+). In terms of biological role, the glycine cleavage system catalyzes the degradation of glycine. This chain is Aminomethyltransferase, found in Proteus mirabilis (strain HI4320).